A 298-amino-acid chain; its full sequence is NAD kinase (298 aa).

The Proton acceptor role is filled by Asp80. NAD(+) is bound by residues 80-81 (DG), 154-155 (ND), Arg182, Asp184, 195-200 (TAYALS), Ala219, and Gln253.

This sequence belongs to the NAD kinase family. It depends on a divalent metal cation as a cofactor.

The protein resides in the cytoplasm. It catalyses the reaction NAD(+) + ATP = ADP + NADP(+) + H(+). Involved in the regulation of the intracellular balance of NAD and NADP, and is a key enzyme in the biosynthesis of NADP. Catalyzes specifically the phosphorylation on 2'-hydroxyl of the adenosine moiety of NAD to yield NADP. This Paracidovorax citrulli (strain AAC00-1) (Acidovorax citrulli) protein is NAD kinase.